The following is a 262-amino-acid chain: Octopine permease ATP-binding protein P (262 aa).

Positions 9-254 (VKLTGIRKNF…PRTERFRQFL (246 aa)) constitute an ABC transporter domain. Residue 41–48 (GSSGSGKS) coordinates ATP.

This sequence belongs to the ABC transporter superfamily.

Its subcellular location is the cell inner membrane. Functionally, component of the octopine active transport system probably consisting of four subunits: Q, M, P and T. The sequence is that of Octopine permease ATP-binding protein P (occP) from Rhizobium meliloti (Ensifer meliloti).